The sequence spans 175 residues: Peptide deformylase (175 aa).

Fe cation-binding residues include cysteine 98 and histidine 140. Residue glutamate 141 is part of the active site. Histidine 144 lines the Fe cation pocket.

This sequence belongs to the polypeptide deformylase family. Fe(2+) is required as a cofactor.

It carries out the reaction N-terminal N-formyl-L-methionyl-[peptide] + H2O = N-terminal L-methionyl-[peptide] + formate. Removes the formyl group from the N-terminal Met of newly synthesized proteins. Requires at least a dipeptide for an efficient rate of reaction. N-terminal L-methionine is a prerequisite for activity but the enzyme has broad specificity at other positions. This is Peptide deformylase from Nitrobacter hamburgensis (strain DSM 10229 / NCIMB 13809 / X14).